The chain runs to 322 residues: Homoserine kinase (322 aa).

Residue 107–117 (PLSSGMGGSAA) participates in ATP binding.

It belongs to the GHMP kinase family. Homoserine kinase subfamily.

The protein localises to the cytoplasm. The enzyme catalyses L-homoserine + ATP = O-phospho-L-homoserine + ADP + H(+). Its pathway is amino-acid biosynthesis; L-threonine biosynthesis; L-threonine from L-aspartate: step 4/5. Catalyzes the ATP-dependent phosphorylation of L-homoserine to L-homoserine phosphate. The chain is Homoserine kinase from Xylella fastidiosa (strain 9a5c).